A 185-amino-acid polypeptide reads, in one-letter code: Ribosome-recycling factor (185 aa).

The interval 132 to 152 (RRDANEQLKKMEKDSELTEDD) is disordered.

It belongs to the RRF family.

It is found in the cytoplasm. Functionally, responsible for the release of ribosomes from messenger RNA at the termination of protein biosynthesis. May increase the efficiency of translation by recycling ribosomes from one round of translation to another. In Alkaliphilus metalliredigens (strain QYMF), this protein is Ribosome-recycling factor.